Here is a 2471-residue protein sequence, read N- to C-terminus: Neurogenic locus notch homolog protein 2 (2471 aa).

Positions 1–25 (MPALRPALLWALLALWLCCAAPAHA) are cleaved as a signal peptide. EGF-like domains are found at residues 26–63 (LQCRDGYEPCVNEGMCVTYHNGTGYCKCPEGFLGEYCQ), 64–102 (HRDPCEKNRCQNGGTCVAQAMLGKATCRCASGFTGEDCQ), 105–143 (TSHPCFVSRPCLNGGTCHMLSRDTYECTCQVGFTGKECQ), and 144–180 (WTDACLSHPCANGSTCTTVANQFSCKCLTGFTGQKCE). The Extracellular portion of the chain corresponds to 26-1677 (LQCRDGYEPC…SESLTPERTQ (1652 aa)). Cystine bridges form between cysteine 28–cysteine 41, cysteine 35–cysteine 51, cysteine 53–cysteine 62, cysteine 68–cysteine 79, cysteine 73–cysteine 90, cysteine 92–cysteine 101, cysteine 109–cysteine 121, cysteine 115–cysteine 131, cysteine 133–cysteine 142, cysteine 148–cysteine 159, cysteine 153–cysteine 168, cysteine 170–cysteine 179, cysteine 186–cysteine 198, cysteine 192–cysteine 207, cysteine 209–cysteine 218, cysteine 225–cysteine 236, cysteine 230–cysteine 246, cysteine 248–cysteine 257, cysteine 264–cysteine 275, cysteine 269–cysteine 284, cysteine 286–cysteine 295, cysteine 302–cysteine 315, cysteine 309–cysteine 324, cysteine 326–cysteine 335, cysteine 342–cysteine 353, cysteine 347–cysteine 362, cysteine 364–cysteine 373, cysteine 379–cysteine 390, cysteine 384–cysteine 401, cysteine 403–cysteine 412, cysteine 419–cysteine 433, cysteine 427–cysteine 442, cysteine 444–cysteine 453, cysteine 460–cysteine 471, cysteine 465–cysteine 480, cysteine 482–cysteine 491, cysteine 498–cysteine 509, cysteine 503–cysteine 518, cysteine 520–cysteine 529, cysteine 536–cysteine 547, cysteine 541–cysteine 556, cysteine 558–cysteine 567, cysteine 574–cysteine 584, cysteine 579–cysteine 593, cysteine 595–cysteine 604, cysteine 611–cysteine 622, cysteine 616–cysteine 631, cysteine 633–cysteine 642, cysteine 649–cysteine 659, cysteine 654–cysteine 668, cysteine 670–cysteine 679, cysteine 686–cysteine 697, cysteine 691–cysteine 706, cysteine 708–cysteine 717, cysteine 724–cysteine 734, cysteine 729–cysteine 743, cysteine 745–cysteine 754, cysteine 761–cysteine 772, cysteine 766–cysteine 781, cysteine 783–cysteine 792, cysteine 799–cysteine 810, cysteine 804–cysteine 819, cysteine 821–cysteine 830, cysteine 837–cysteine 848, cysteine 842–cysteine 859, cysteine 861–cysteine 870, cysteine 877–cysteine 888, cysteine 882–cysteine 897, cysteine 899–cysteine 908, cysteine 915–cysteine 926, cysteine 920–cysteine 935, cysteine 937–cysteine 946, cysteine 953–cysteine 964, cysteine 958–cysteine 973, cysteine 975–cysteine 984, cysteine 991–cysteine 1002, cysteine 996–cysteine 1011, cysteine 1013–cysteine 1022, cysteine 1029–cysteine 1040, cysteine 1034–cysteine 1049, cysteine 1051–cysteine 1060, cysteine 1067–cysteine 1078, cysteine 1072–cysteine 1087, and cysteine 1089–cysteine 1098. N-linked (GlcNAc...) asparagine glycosylation is present at asparagine 46. Residue asparagine 155 is glycosylated (N-linked (GlcNAc...) asparagine). Residues 182-219 (DVNECDIPGHCQHGGTCLNLPGSYQCQCPQGFTGQYCD) enclose the EGF-like 5; calcium-binding domain. Residues 221–258 (LYVPCAPSPCVNGGTCRQTGDFTFECNCLPGFEGSTCE) enclose the EGF-like 6 domain. In terms of domain architecture, EGF-like 7; calcium-binding spans 260–296 (NIDDCPNHRCQNGGVCVDGVNTYNCRCPPQWTGQFCT). An EGF-like 8; calcium-binding domain is found at 298 to 336 (DVDECLLQPNACQNGGTCANRNGGYGCVCVNGWSGDDCS). The EGF-like 9; calcium-binding domain maps to 338 to 374 (NIDDCAFASCTPGSTCIDRVASFSCMCPEGKAGLLCH). The EGF-like 10 domain maps to 375–413 (LDDACISNPCHKGALCDTNPLNGQYICTCPQGYKGADCT). Residues 415–454 (DVDECAMANSNPCEHAGKCVNTDGAFHCECLKGYAGPRCE) enclose the EGF-like 11; calcium-binding domain. The 37-residue stretch at 456-492 (DINECHSDPCQNDATCLDKIGGFTCLCMPGFKGVHCE) folds into the EGF-like 12; calcium-binding domain. The EGF-like 13; calcium-binding domain occupies 494–530 (EINECQSNPCVNNGQCVDKVNRFQCLCPPGFTGPVCQ). An EGF-like 14; calcium-binding domain is found at 532 to 568 (DIDDCSSTPCLNGAKCIDHPNGYECQCATGFTGVLCE). Residues 570–605 (NIDNCDPDPCHHGQCQDGIDSYTCICNPGYMGAICS) enclose the EGF-like 15; calcium-binding domain. In terms of domain architecture, EGF-like 16; calcium-binding spans 607-643 (QIDECYSSPCLNDGRCIDLVNGYQCNCQPGTSGVNCE). A glycan (O-linked (Glc...) serine; alternate) is linked at serine 613. An O-linked (Xyl...) serine; alternate glycan is attached at serine 613. Residues 645 to 680 (NFDDCASNPCIHGICMDGINRYSCVCSPGFTGQRCN) enclose the EGF-like 17; calcium-binding domain. The EGF-like 18; calcium-binding domain occupies 682-718 (DIDECASNPCRKGATCINGVNGFRCICPEGPHHPSCY). The EGF-like 19 domain maps to 720 to 755 (QVNECLSNPCIHGNCTGGLSGYKCLCDAGWVGINCE). Asparagine 733 carries N-linked (GlcNAc...) asparagine glycosylation. The EGF-like 20; calcium-binding domain occupies 757 to 793 (DKNECLSNPCQNGGTCDNLVNGYRCTCKKGFKGYNCQ). Positions 795–831 (NIDECASNPCLNQGTCFDDISGYTCHCVLPYTGKNCQ) constitute an EGF-like 21; calcium-binding domain. Positions 833–871 (VLAPCSPNPCENAAVCKESPNFESYTCLCAPGWQGQRCT) constitute an EGF-like 22 domain. Positions 873-909 (DIDECISKPCMNHGLCHNTQGSYMCECPPGFSGMDCE) constitute an EGF-like 23; calcium-binding domain. Positions 911–947 (DIDDCLANPCQNGGSCMDGVNTFSCLCLPGFTGDKCQ) constitute an EGF-like 24; calcium-binding domain. The EGF-like 25; calcium-binding domain occupies 949–985 (DMNECLSEPCKNGGTCSDYVNSYTCKCQAGFDGVHCE). The region spanning 987–1023 (NINECTESSCFNGGTCVDGINSFSCLCPVGFTGSFCL) is the EGF-like 26; calcium-binding domain. Residues 1025–1061 (EINECSSHPCLNEGTCVDGLGTYRCSCPLGYTGKNCQ) enclose the EGF-like 27; calcium-binding domain. 2 consecutive EGF-like domains span residues 1063-1099 (LVNLCSRSPCKNKGTCVQKKAESQCLCPSGWAGAYCD) and 1101-1147 (PNVS…SYCE). Asparagine 1102 is a glycosylation site (N-linked (GlcNAc...) asparagine). Cystine bridges form between cysteine 1105/cysteine 1126, cysteine 1120/cysteine 1135, cysteine 1137/cysteine 1146, cysteine 1153/cysteine 1164, cysteine 1158/cysteine 1173, cysteine 1175/cysteine 1184, cysteine 1191/cysteine 1202, cysteine 1196/cysteine 1211, cysteine 1213/cysteine 1222, cysteine 1229/cysteine 1241, cysteine 1235/cysteine 1250, cysteine 1252/cysteine 1261, cysteine 1268/cysteine 1281, cysteine 1273/cysteine 1290, cysteine 1292/cysteine 1301, cysteine 1308/cysteine 1319, cysteine 1313/cysteine 1331, cysteine 1333/cysteine 1342, cysteine 1378/cysteine 1389, cysteine 1383/cysteine 1400, cysteine 1402/cysteine 1411, cysteine 1425/cysteine 1448, cysteine 1430/cysteine 1443, and cysteine 1439/cysteine 1455. The EGF-like 30; calcium-binding domain maps to 1149–1185 (QLDECASNPCQHGATCSDFIGGYRCECVPGYQGVNCE). The EGF-like 31; calcium-binding domain maps to 1187 to 1223 (EVDECQNQPCQNGGTCIDLVNHFKCSCPPGTRGLLCE). Residues 1225 to 1262 (NIDDCARGPHCLNGGQCMDRIGGYSCRCLPGFAGERCE) enclose the EGF-like 32; calcium-binding domain. 3 consecutive EGF-like domains span residues 1264–1302 (DINECLSNPCSSEGSLDCIQLTNDYLCVCRSAFTGRHCE), 1304–1343 (FVDVCPQMPCLNGGTCAVASNMPDGFICRCPPGFSGARCQ), and 1374–1412 (CESGCASSPCQHGGSCHPQRQPPYYSCQCAPPFSGSRCE). 3 LNR repeats span residues 1425 to 1465 (CLSQ…PWAN), 1466 to 1502 (CSSPLPCWDYINNQCDELCNTVECLFDNFECQGNSKT), and 1503 to 1544 (CKYD…NLAE). Residues 1425 to 1677 (CLSQYCADKA…SESLTPERTQ (253 aa)) are negative regulatory region (NRR). An N-linked (GlcNAc...) asparagine glycan is attached at asparagine 1465. Intrachain disulfides connect cysteine 1466/cysteine 1489, cysteine 1472/cysteine 1484, cysteine 1480/cysteine 1496, cysteine 1503/cysteine 1527, cysteine 1509/cysteine 1522, cysteine 1518/cysteine 1534, and cysteine 1632/cysteine 1639. The chain crosses the membrane as a helical span at residues 1678–1698 (LLYLLAVAVVIILFIILLGVI). Over 1699 to 2471 (MAKRKRKHGS…PPHNNMQVYA (773 aa)) the chain is Cytoplasmic. A Phosphothreonine modification is found at threonine 1716. The tract at residues 1754–1788 (TSEHWVDDEGPQPKKVKAEDEALLSEEDDPIDRRP) is disordered. Over residues 1774 to 1783 (EALLSEEDDP) the composition is skewed to acidic residues. Residue serine 1778 is modified to Phosphoserine. Threonine 1802 carries the post-translational modification Phosphothreonine. Phosphoserine is present on serine 1804. Position 1808 is a phosphothreonine (threonine 1808). ANK repeat units lie at residues 1827–1871 (DGCT…SLQA), 1876–1905 (TGEMALHLAARYSRADAAKRLLDAGADANA), 1909–1939 (MGRCPLHAAVAADAQGVFQILIRNRVTDLDA), 1943–1972 (DGTTPLILAARLAVEGMVAELINCQADVNA), 1976–2005 (HGKSALHWAAAVNNVEATLLLLKNGANRDM), and 2009–2038 (KEETPLFLAAREGSYEAAKILLDHFANRDI). 2 positions are modified to phosphoserine: serine 1842 and serine 1845. Phosphoserine occurs at positions 2070, 2078, and 2081. Disordered regions lie at residues 2091–2168 (FLSL…TSSP) and 2380–2471 (VGKY…QVYA). Position 2097 is a phosphothreonine (threonine 2097). Positions 2098-2107 (PMGKKSRRPS) are enriched in basic residues. 4 stretches are compositionally biased toward polar residues: residues 2108 to 2117 (AKSTMPTSLP), 2137 to 2150 (EKVQLSESSVTLSP), 2159 to 2168 (TYVSDTTSSP), and 2388 to 2406 (SQHSYASSNAAERTPSHSG). The segment covering 2417-2445 (PSPESPDQWSSSSPHSASDWSDVTTSPTP) has biased composition (low complexity).

It belongs to the NOTCH family. In terms of assembly, heterodimer of a C-terminal fragment N(TM) and an N-terminal fragment N(EC) which are probably linked by disulfide bonds. Interacts with MAML1, MAML2 and MAML3 which act as transcriptional coactivators for NOTCH2. Interacts with RELA/p65. Interacts with HIF1AN. Interacts (via ANK repeats) with TCIM, the interaction inhibits the nuclear translocation of NOTCH2 N2ICD. Interacts with CUL1, RBX1, SKP1 and FBXW7 that are SCF(FBXW7) E3 ubiquitin-protein ligase complex components. Interacts with MINAR1; this interaction increases MINAR1 stability and function. Interacts with NOTCH2NL (NOTCH2NLA, NOTCH2NLB and/or NOTCH2NLC); leading to enhance Notch signaling pathway in a non-cell-autonomous manner. Interacts with MDK; this interaction mediates a nuclear accumulation of NOTCH2 and therefore activation of NOTCH2 signaling leading to interaction between HES1 and STAT3. Interacts with MINAR2. Synthesized in the endoplasmic reticulum as an inactive form which is proteolytically cleaved by a furin-like convertase in the trans-Golgi network before it reaches the plasma membrane to yield an active, ligand-accessible form. Cleavage results in a C-terminal fragment N(TM) and a N-terminal fragment N(EC). Following ligand binding, it is cleaved by TNF-alpha converting enzyme (TACE) to yield a membrane-associated intermediate fragment called notch extracellular truncation (NEXT). This fragment is then cleaved by presenilin dependent gamma-secretase to release a notch-derived peptide containing the intracellular domain (NICD) from the membrane. Post-translationally, hydroxylated by HIF1AN. In terms of processing, can be either O-glucosylated or O-xylosylated at Ser-613 by POGLUT1. Phosphorylated by GSK3. GSK3-mediated phosphorylation is necessary for NOTCH2 recognition by FBXW7, ubiquitination and degradation via the ubiquitin proteasome pathway. In terms of tissue distribution, expressed in the brain, heart, kidney, lung, skeletal muscle and liver. Ubiquitously expressed in the embryo.

Its subcellular location is the cell membrane. The protein localises to the nucleus. It is found in the cytoplasm. In terms of biological role, functions as a receptor for membrane-bound ligands Jagged-1 (JAG1), Jagged-2 (JAG2) and Delta-1 (DLL1) to regulate cell-fate determination. Upon ligand activation through the released notch intracellular domain (NICD) it forms a transcriptional activator complex with RBPJ/RBPSUH and activates genes of the enhancer of split locus. Affects the implementation of differentiation, proliferation and apoptotic programs. Involved in bone remodeling and homeostasis. In collaboration with RELA/p65 enhances NFATc1 promoter activity and positively regulates RANKL-induced osteoclast differentiation. Positively regulates self-renewal of liver cancer cells. In Homo sapiens (Human), this protein is Neurogenic locus notch homolog protein 2.